Reading from the N-terminus, the 361-residue chain is Phenylalanine--tRNA ligase alpha subunit (361 aa).

Mg(2+) is bound at residue Glu260.

This sequence belongs to the class-II aminoacyl-tRNA synthetase family. Phe-tRNA synthetase alpha subunit type 1 subfamily. In terms of assembly, tetramer of two alpha and two beta subunits. Mg(2+) is required as a cofactor.

Its subcellular location is the cytoplasm. The catalysed reaction is tRNA(Phe) + L-phenylalanine + ATP = L-phenylalanyl-tRNA(Phe) + AMP + diphosphate + H(+). This is Phenylalanine--tRNA ligase alpha subunit from Bartonella henselae (strain ATCC 49882 / DSM 28221 / CCUG 30454 / Houston 1) (Rochalimaea henselae).